The following is a 424-amino-acid chain: MIDLKLLRDNPQEFSDRLAKRGKFDLQPILDLDRQQRELEVERSQLQARSNAIAKQIGEKMKSGNKSDPALEGLRAEAGQIKTTLAELEPKEKQLKDELEQQLLLIPNLPSDSTPVGKDEAENVEVRRWGEEYIPKSKDILPHWEMGEKLGILNFERSVKIAQSRFATLIGAGAALERALIQFMLDRHTSAGYLEVLPPFLINSTSLTATGQLPKFAEESFKCEADDLWLAPTAEVPVTNLYRDEILTAENLPIYHCAYTPCFRREAGSYGRDTRGLIRLHQFNKVELVKLVHPSTSEQEHEALVRDASAILEALQLPYRVIELCTGDLGFSAAKCYDLEVWLPSAGCYREISSCSNFYDFQARRGKIRFKESGQKGTQFVHTLNGSGLAVGRTMAAILENYQQPDGSVRIPPVLQPYLGRETL.

233-235 (TAE) lines the L-serine pocket. 264 to 266 (RRE) contacts ATP. Glu287 provides a ligand contact to L-serine. 351-354 (EISS) serves as a coordination point for ATP. Position 387 (Ser387) interacts with L-serine.

Belongs to the class-II aminoacyl-tRNA synthetase family. Type-1 seryl-tRNA synthetase subfamily. As to quaternary structure, homodimer. The tRNA molecule binds across the dimer.

Its subcellular location is the cytoplasm. The catalysed reaction is tRNA(Ser) + L-serine + ATP = L-seryl-tRNA(Ser) + AMP + diphosphate + H(+). The enzyme catalyses tRNA(Sec) + L-serine + ATP = L-seryl-tRNA(Sec) + AMP + diphosphate + H(+). It participates in aminoacyl-tRNA biosynthesis; selenocysteinyl-tRNA(Sec) biosynthesis; L-seryl-tRNA(Sec) from L-serine and tRNA(Sec): step 1/1. Its function is as follows. Catalyzes the attachment of serine to tRNA(Ser). Is also able to aminoacylate tRNA(Sec) with serine, to form the misacylated tRNA L-seryl-tRNA(Sec), which will be further converted into selenocysteinyl-tRNA(Sec). This is Serine--tRNA ligase from Cyanothece sp. (strain PCC 7425 / ATCC 29141).